The primary structure comprises 172 residues: ATP synthase subunit b (172 aa).

Residues L11–F30 form a helical membrane-spanning segment.

Belongs to the ATPase B chain family. As to quaternary structure, F-type ATPases have 2 components, F(1) - the catalytic core - and F(0) - the membrane proton channel. F(1) has five subunits: alpha(3), beta(3), gamma(1), delta(1), epsilon(1). F(0) has three main subunits: a(1), b(2) and c(10-14). The alpha and beta chains form an alternating ring which encloses part of the gamma chain. F(1) is attached to F(0) by a central stalk formed by the gamma and epsilon chains, while a peripheral stalk is formed by the delta and b chains.

It is found in the cell inner membrane. Its function is as follows. F(1)F(0) ATP synthase produces ATP from ADP in the presence of a proton or sodium gradient. F-type ATPases consist of two structural domains, F(1) containing the extramembraneous catalytic core and F(0) containing the membrane proton channel, linked together by a central stalk and a peripheral stalk. During catalysis, ATP synthesis in the catalytic domain of F(1) is coupled via a rotary mechanism of the central stalk subunits to proton translocation. Functionally, component of the F(0) channel, it forms part of the peripheral stalk, linking F(1) to F(0). The protein is ATP synthase subunit b of Methylacidiphilum infernorum (isolate V4) (Methylokorus infernorum (strain V4)).